The following is a 361-amino-acid chain: MMDSPKKLGYHMPAEYEPHHGTLMIWPTRPGSWPFQGKAAKRAFTQIIETIAEGERVYLLVEQAYLSEAQSYLGDKVVYLDIPTNDAWARDTGPTILVNDKGKKLAVDWAFNAWGGTYDGLYQDYEEDDQVASRFAEALGRPVYDAKPFVLEGGAIHSDGQGTILVTESCLLSPGRNPNLTKEEIENTLLESLGAEKVIWLPYGIYQDETNEHVDNVAAFVGPAELVLAWTDDENDPQYAMSKADLELLEQETDAKGCHFTIHKLPIPAVRQVVTEEDLPGYIYEEGEEKRYAGERLAASYVNFYIANKAVLVPQFEDVNDQVALDILSKCFPDRKVVGIPARDILLGGGNIHCITQQIPE.

Catalysis depends on cysteine 354, which acts as the Amidino-cysteine intermediate.

This sequence belongs to the agmatine deiminase family.

It carries out the reaction agmatine + H2O = N-carbamoylputrescine + NH4(+). In Streptococcus pneumoniae (strain P1031), this protein is Putative agmatine deiminase.